A 461-amino-acid chain; its full sequence is Transcription factor SOX-10 (461 aa).

5 disordered regions span residues 1–60 (MADD…ADDD), 154–191 (LRMQ…GEAG), 205–268 (LDHR…DFGN), 350–369 (KAQV…DQPS), and 433–461 (AISD…LSRP). Polar residues predominate over residues 30-42 (ASDNSSHLASSGN). The interval 56–96 (EADDDKFPVCIREAVSQVLSGYDWTLVPMPVRVNGSNKSKP) is dimerization (DIM). A DNA-binding region (HMG box) is located at residues 98–166 (VKRPMNAFMV…QHKKDHPDYK (69 aa)). Residues 154 to 167 (LRMQHKKDHPDYKY) show a composition bias toward basic and acidic residues. Residues 181–191 (EGEGQVEGEAG) are compositionally biased toward gly residues. Residues 221–306 (PEHSSGQSHG…NGHAGHPGHV (86 aa)) form a transactivation domain (TAM) region. Residues 247–264 (ADSKREGRSLGEGGKPHI) are compositionally biased toward basic and acidic residues. The transactivation domain (TAC) stretch occupies residues 350–461 (KAQVKTEGSA…QPVYTTLSRP (112 aa)). The segment covering 441–461 (VPQSHSPTHWEQPVYTTLSRP) has biased composition (polar residues).

It localises to the cytoplasm. Its subcellular location is the nucleus. Its function is as follows. Transcription factor that plays a central role in developing and mature glia. Specifically activates expression of myelin genes, during oligodendrocyte (OL) maturation, thereby playing a central role in oligodendrocyte maturation and CNS myelination. In Gallus gallus (Chicken), this protein is Transcription factor SOX-10 (SOX10).